A 247-amino-acid polypeptide reads, in one-letter code: MMDRIVMEVSRYRPEIESAPTFQAYEVPLTREWAVLDGLTYIKDHLDGTLSFRWSCRMGICGSSGMTINGDPKLACATFLADYLPGPVRVEPMRNFPVIRDLVVDISDFMAKLPSVKPWLVRHDEPPVEDGEYRQTPAELDAFKQFSMCINCMLCYSACPVYALDPDFLGPAAIALGQRYNLDSRDQGAADRRDVLAAADGAWACTLVGECSTACPKGVDPAGAIQRYKLTAATHALKKLLFPWGGG.

Tyr12 is an a menaquinone binding site. Positions 14–94 (PEIESAPTFQ…PGPVRVEPMR (81 aa)) constitute a 2Fe-2S ferredoxin-type domain. Cys56, Cys61, and Cys76 together coordinate [2Fe-2S] cluster. The 4Fe-4S ferredoxin-type domain occupies 140 to 169 (LDAFKQFSMCINCMLCYSACPVYALDPDFL). [4Fe-4S] cluster is bound by residues Cys149, Cys152, and Cys155. The [3Fe-4S] cluster site is built by Cys159, Cys205, and Cys211. A [4Fe-4S] cluster-binding site is contributed by Cys215. 226 to 229 (QRYK) provides a ligand contact to a menaquinone.

It belongs to the succinate dehydrogenase/fumarate reductase iron-sulfur protein family. As to quaternary structure, fumarate dehydrogenase forms part of an enzyme complex containing four subunits: a flavoprotein, an iron-sulfur, and two hydrophobic anchor proteins. It depends on [2Fe-2S] cluster as a cofactor. [3Fe-4S] cluster is required as a cofactor. The cofactor is [4Fe-4S] cluster.

It localises to the cell membrane. The enzyme catalyses a quinone + succinate = fumarate + a quinol. It catalyses the reaction a menaquinone + succinate = a menaquinol + fumarate. This is Fumarate reductase iron-sulfur subunit (frdB) from Mycobacterium tuberculosis (strain CDC 1551 / Oshkosh).